The chain runs to 524 residues: GMP synthase [glutamine-hydrolyzing] (524 aa).

The Glutamine amidotransferase type-1 domain occupies 12–201; the sequence is TILVLDFGSQ…AVDICKASQS (190 aa). Residue cysteine 88 is the Nucleophile of the active site. Catalysis depends on residues histidine 175 and glutamate 177. In terms of domain architecture, GMPS ATP-PPase spans 202-399; that stretch reads WNMENFIDTE…LGISHELVWR (198 aa). 230-236 provides a ligand contact to ATP; that stretch reads SGGVDST. Residues arginine 303, aspartate 461, lysine 516, and glutamate 522 each contribute to the XMP site.

Homodimer. The cofactor is Mg(2+).

Its subcellular location is the cytoplasm. The protein localises to the cytosol. The catalysed reaction is XMP + L-glutamine + ATP + H2O = GMP + L-glutamate + AMP + diphosphate + 2 H(+). It participates in purine metabolism; GMP biosynthesis; GMP from XMP (L-Gln route): step 1/1. Functionally, catalyzes the conversion of xanthine monophosphate (XMP) to GMP in the presence of glutamine and ATP through an adenyl-XMP intermediate. This Kluyveromyces lactis (strain ATCC 8585 / CBS 2359 / DSM 70799 / NBRC 1267 / NRRL Y-1140 / WM37) (Yeast) protein is GMP synthase [glutamine-hydrolyzing] (GUA1).